A 521-amino-acid polypeptide reads, in one-letter code: Bacillolysin (521 aa).

The N-terminal stretch at 1 to 27 (MGLGKKLSVAVAASFMSLSISLPGVQA) is a signal peptide. The propeptide at 28 to 221 (AEGHQLKENQ…ILKQQNKVEH (194 aa)) is activation peptide. Asp-360 is a Ca(2+) binding site. Position 364 (His-364) interacts with Zn(2+). Glu-365 is a catalytic residue. Residues His-368 and Glu-388 each contribute to the Zn(2+) site. 4 residues coordinate Ca(2+): Asp-399, Asp-402, Asp-404, and Glu-407. The active-site Proton donor is the His-449.

This sequence belongs to the peptidase M4 family. Requires Ca(2+) as cofactor. Zn(2+) is required as a cofactor.

The protein localises to the secreted. It catalyses the reaction Similar, but not identical, to that of thermolysin.. In terms of biological role, extracellular zinc metalloprotease. In Bacillus subtilis subsp. amylosacchariticus, this protein is Bacillolysin (nprE).